Consider the following 785-residue polypeptide: uncharacterized protein (785 aa).

In terms of domain architecture, DOD-type homing endonuclease spans 293 to 421; sequence LVGYFLSEGY…LRLISLRLGF (129 aa).

Post-translationally, this protein undergoes a protein self splicing that involves a post-translational excision of the intervening region (intein) followed by peptide ligation.

This is an uncharacterized protein from Methanocaldococcus jannaschii (strain ATCC 43067 / DSM 2661 / JAL-1 / JCM 10045 / NBRC 100440) (Methanococcus jannaschii).